The primary structure comprises 318 residues: Tyrosine recombinase XerC (318 aa).

The region spanning 17-108 is the Core-binding (CB) domain; sequence PEVMAERRRW…GLRSFLRYLE (92 aa). Residues 129–312 form the Tyr recombinase domain; sequence SLPKALTDRE…DSARLLEIYD (184 aa). Residues arginine 172, lysine 196, histidine 264, arginine 267, and histidine 290 contribute to the active site. Tyrosine 299 acts as the O-(3'-phospho-DNA)-tyrosine intermediate in catalysis.

The protein belongs to the 'phage' integrase family. XerC subfamily. As to quaternary structure, forms a cyclic heterotetrameric complex composed of two molecules of XerC and two molecules of XerD.

It is found in the cytoplasm. Site-specific tyrosine recombinase, which acts by catalyzing the cutting and rejoining of the recombining DNA molecules. The XerC-XerD complex is essential to convert dimers of the bacterial chromosome into monomers to permit their segregation at cell division. It also contributes to the segregational stability of plasmids. This is Tyrosine recombinase XerC from Rhizobium meliloti (strain 1021) (Ensifer meliloti).